We begin with the raw amino-acid sequence, 227 residues long: UPF0758 protein Rxyl_1530 (227 aa).

An MPN domain is found at 106–227 (VISSPADVDG…YFSMKEHGML (122 aa)). Residues His-177, His-179, and Asp-190 each coordinate Zn(2+). A JAMM motif motif is present at residues 177 to 190 (HNHPSGRVEPSRED).

This sequence belongs to the UPF0758 family.

The chain is UPF0758 protein Rxyl_1530 from Rubrobacter xylanophilus (strain DSM 9941 / JCM 11954 / NBRC 16129 / PRD-1).